A 154-amino-acid polypeptide reads, in one-letter code: 6,7-dimethyl-8-ribityllumazine synthase (154 aa).

5-amino-6-(D-ribitylamino)uracil contacts are provided by residues F23, A57–E59, and A81–I83. G86–T87 contributes to the (2S)-2-hydroxy-3-oxobutyl phosphate binding site. Catalysis depends on H89, which acts as the Proton donor. 5-amino-6-(D-ribitylamino)uracil is bound at residue F114. R128 contributes to the (2S)-2-hydroxy-3-oxobutyl phosphate binding site.

Belongs to the DMRL synthase family. As to quaternary structure, forms an icosahedral capsid composed of 60 subunits, arranged as a dodecamer of pentamers.

It catalyses the reaction (2S)-2-hydroxy-3-oxobutyl phosphate + 5-amino-6-(D-ribitylamino)uracil = 6,7-dimethyl-8-(1-D-ribityl)lumazine + phosphate + 2 H2O + H(+). It participates in cofactor biosynthesis; riboflavin biosynthesis; riboflavin from 2-hydroxy-3-oxobutyl phosphate and 5-amino-6-(D-ribitylamino)uracil: step 1/2. Its function is as follows. Catalyzes the formation of 6,7-dimethyl-8-ribityllumazine by condensation of 5-amino-6-(D-ribitylamino)uracil with 3,4-dihydroxy-2-butanone 4-phosphate. This is the penultimate step in the biosynthesis of riboflavin. This Acidithiobacillus ferrooxidans (strain ATCC 23270 / DSM 14882 / CIP 104768 / NCIMB 8455) (Ferrobacillus ferrooxidans (strain ATCC 23270)) protein is 6,7-dimethyl-8-ribityllumazine synthase.